The chain runs to 465 residues: tRNA-2-methylthio-N(6)-dimethylallyladenosine synthase (465 aa).

The MTTase N-terminal domain occupies 26 to 141 (MRAHIITYGC…LPEALKANER (116 aa)). [4Fe-4S] cluster-binding residues include C35, C71, C104, C173, C177, and C180. The region spanning 159–388 (PKGALSAHVT…IEKQKEWSYR (230 aa)) is the Radical SAM core domain. Positions 391 to 453 (LEWVGKTVEV…PHLLFGEVVG (63 aa)) constitute a TRAM domain.

Belongs to the methylthiotransferase family. MiaB subfamily. As to quaternary structure, monomer. Requires [4Fe-4S] cluster as cofactor.

It is found in the cytoplasm. It catalyses the reaction N(6)-dimethylallyladenosine(37) in tRNA + (sulfur carrier)-SH + AH2 + 2 S-adenosyl-L-methionine = 2-methylsulfanyl-N(6)-dimethylallyladenosine(37) in tRNA + (sulfur carrier)-H + 5'-deoxyadenosine + L-methionine + A + S-adenosyl-L-homocysteine + 2 H(+). Functionally, catalyzes the methylthiolation of N6-(dimethylallyl)adenosine (i(6)A), leading to the formation of 2-methylthio-N6-(dimethylallyl)adenosine (ms(2)i(6)A) at position 37 in tRNAs that read codons beginning with uridine. This Thermus thermophilus (strain ATCC BAA-163 / DSM 7039 / HB27) protein is tRNA-2-methylthio-N(6)-dimethylallyladenosine synthase.